A 164-amino-acid chain; its full sequence is Cyclic pyranopterin monophosphate synthase (164 aa).

Substrate is bound by residues 75-77 and 116-117; these read MCH and ME. Aspartate 131 is a catalytic residue.

The protein belongs to the MoaC family. Homohexamer; trimer of dimers.

The catalysed reaction is (8S)-3',8-cyclo-7,8-dihydroguanosine 5'-triphosphate = cyclic pyranopterin phosphate + diphosphate. The protein operates within cofactor biosynthesis; molybdopterin biosynthesis. In terms of biological role, catalyzes the conversion of (8S)-3',8-cyclo-7,8-dihydroguanosine 5'-triphosphate to cyclic pyranopterin monophosphate (cPMP). In Staphylococcus aureus (strain Mu3 / ATCC 700698), this protein is Cyclic pyranopterin monophosphate synthase.